The primary structure comprises 357 residues: MAIKMNLASSKVGAKASAKSVRGARLVARVAQPMSPSSAATAAADASMLARAGLPPTTTPYDDYKFAPIREAEVNRAMTRRYFKDMDEFAESDVVIVGAGSAGLACAFELGRIAPHLKVALMEQSVAPGGGAWLGGQLFSAMVVRKPAHEMLDALQVPYEDEGHYVVVRHAALLTSTLMSHVLKNPNVKLFNATAVEDLIVKPDPALGPGGRRVAGVVTNWSLVAQAHGTQSCMDPNVIEAGVVVSACGHDGPFGATGVKRLARLGMVPGGEVPGMGALDMEAAEGSIVNNTREVVPGMVLTGMELAEVDGSPRMGPTFGAMIVSGMRAAHMAVAALERRRALSAAAAEGAAAEAQA.

Substrate contacts are provided by residues Ala-102, 123 to 124, Gly-131, and Val-196; that span reads EQ. Residue Cys-233 is modified to 2,3-didehydroalanine (Cys). Residues Asp-235, His-250, Met-304, and 314 to 316 each bind substrate; that span reads RMG.

Belongs to the THI4 family. As to quaternary structure, homooctamer. Fe cation serves as cofactor. During the catalytic reaction, a sulfide is transferred from Cys-233 to a reaction intermediate, generating a dehydroalanine residue.

It localises to the plastid. The protein resides in the chloroplast. It catalyses the reaction [ADP-thiazole synthase]-L-cysteine + glycine + NAD(+) = [ADP-thiazole synthase]-dehydroalanine + ADP-5-ethyl-4-methylthiazole-2-carboxylate + nicotinamide + 3 H2O + 2 H(+). Functionally, involved in biosynthesis of the thiamine precursor thiazole. Catalyzes the conversion of NAD and glycine to adenosine diphosphate 5-(2-hydroxyethyl)-4-methylthiazole-2-carboxylic acid (ADT), an adenylated thiazole intermediate. The reaction includes an iron-dependent sulfide transfer from a conserved cysteine residue of the protein to a thiazole intermediate. The enzyme can only undergo a single turnover, which suggests it is a suicide enzyme. May have additional roles in adaptation to various stress conditions and in DNA damage tolerance. The sequence is that of Thiamine thiazole synthase, chloroplastic from Chlamydomonas reinhardtii (Chlamydomonas smithii).